We begin with the raw amino-acid sequence, 537 residues long: Leucine-rich repeat LGI family member 4 (537 aa).

An N-terminal signal peptide occupies residues 1–19; sequence MGGAGILLFLLAWAGAGVA. 4 LRR repeats span residues 53 to 74, 77 to 98, 101 to 122, and 125 to 146; these read TLLS…SFLK, SLHL…AFIG, YLQY…ALRG, and SLTH…LFRG. Residues 158–208 form the LRRCT domain; that stretch reads NPFQCDCRVLWLLQWMPTVNASVGTGACAGPPAVAQIQLNHLDPKKFKCRA. N177 carries an N-linked (GlcNAc...) asparagine glycan. 7 EAR repeats span residues 210–252, 256–298, 302–349, 351–394, 396–439, 441–483, and 487–532; these read ELSW…VWDY, RFRP…SRSS, RLTP…CRDG, GFYP…HWVG, RFER…RWDG, MFRL…RFES, and ILEP…QHHE.

As to quaternary structure, can bind to ADAM11, ADAM22 and ADAM23. As to expression, brain. Expressed in the entire developing peripheral nerves. Strongly expressed in the trigeminal nerve and ganglion and particularly abundant in the boundary cap cells - a transient population of cells that contributes to the Schwann cell population of the dorsal root nerve.

It localises to the secreted. Component of Schwann cell signaling pathway(s) that controls axon segregation and myelin formation. This chain is Leucine-rich repeat LGI family member 4 (Lgi4), found in Mus musculus (Mouse).